The chain runs to 1869 residues: Chitin synthase 6 (1869 aa).

The segment at 1-23 (MAMNLPPLAGSGGAHTQPSLPAL) is disordered. Residues 1 to 778 (MAMNLPPLAG…EIAHLSEASL (778 aa)) enclose the Myosin motor domain. 104–111 (GESGSGKS) provides a ligand contact to ATP. N-linked (GlcNAc...) asparagine glycosylation is found at Asn123, Asn417, Asn426, and Asn557. Disordered regions lie at residues 593–612 (KPMR…ARNQ) and 620–640 (AEEE…AAKA). Residues 629-640 (ENNSQAGGAAKA) show a composition bias toward low complexity. N-linked (GlcNAc...) asparagine glycosylation is found at Asn630 and Asn657. An actin-binding region spans residues 655-679 (LDNVTKAVADPSTNSYFVFCLKPND). 2 helical membrane-spanning segments follow: residues 886-906 (WLFM…RFIG) and 925-945 (LIIW…PMLI). The Cytochrome b5 heme-binding domain maps to 949–1010 (QHVYSAAELS…YAGKDATSLF (62 aa)). 3 N-linked (GlcNAc...) asparagine glycosylation sites follow: Asn1037, Asn1062, and Asn1165. A helical transmembrane segment spans residues 1201-1221 (LVLAISIMLVTIIAFKFFAAL). N-linked (GlcNAc...) asparagine glycans are attached at residues Asn1458 and Asn1564. Helical transmembrane passes span 1596–1616 (LSTV…VMVI), 1622–1642 (VPVT…IIFI), and 1649–1669 (MIGW…GLPL). Asn1778 is a glycosylation site (N-linked (GlcNAc...) asparagine). Residues 1811-1866 (LPSDDALLAEIREILRTADLMTVTKKGIKQELERRFGVPLDAKRAYINSATEALLS) enclose the DEK-C domain.

This sequence in the N-terminal section; belongs to the TRAFAC class myosin-kinesin ATPase superfamily. Myosin family. The protein in the C-terminal section; belongs to the chitin synthase family. Class V subfamily.

The protein localises to the cell membrane. The enzyme catalyses [(1-&gt;4)-N-acetyl-beta-D-glucosaminyl](n) + UDP-N-acetyl-alpha-D-glucosamine = [(1-&gt;4)-N-acetyl-beta-D-glucosaminyl](n+1) + UDP + H(+). Polymerizes chitin, a structural polymer of the cell wall and septum, by transferring the sugar moiety of UDP-GlcNAc to the non-reducing end of the growing chitin polymer. Plays a role in cell wall integrity and is involved in tolerance to hyperosmotic conditions. Required to successfully penetrate the host plants and thus plays a key role in pathogenicity. This is Chitin synthase 6 from Verticillium dahliae (strain VdLs.17 / ATCC MYA-4575 / FGSC 10137) (Verticillium wilt).